Reading from the N-terminus, the 81-residue chain is Adipogenin (81 aa).

The helical transmembrane segment at 16-36 threads the bilayer; that stretch reads FLASWLCLPVGLLLFLLIVWL.

It belongs to the adipogenin family.

It is found in the membrane. It localises to the nucleus. In terms of biological role, plays a role in stimulating adipocyte differentiation and development. The polypeptide is Adipogenin (Sus scrofa (Pig)).